A 113-amino-acid chain; its full sequence is Protein SPIRAL1-like 1 (113 aa).

Residues 1–12 (MGRGVSVGGGQS) show a composition bias toward gly residues. A disordered region spans residues 1-50 (MGRGVSVGGGQSSLGYLFGSGEAPKPAINNAPAPSSETLPISADPSPKHV). Positions 23 to 34 (APKPAINNAPAP) are enriched in low complexity. Ser69 is subject to Phosphoserine. The segment at 79–113 (QNTGNFLTDRPSTKVHAAPGGGSSLDYLFGGGGSN) is disordered. The segment covering 97-113 (PGGGSSLDYLFGGGGSN) has biased composition (gly residues).

It belongs to the SPIRAL1 family. As to expression, detected in pollen of mature flowers.

In terms of biological role, acts redundantly with SPR1 in maintaining the cortical microtubules organization essential for anisotropic cell growth. In Arabidopsis thaliana (Mouse-ear cress), this protein is Protein SPIRAL1-like 1 (SP1L1).